The sequence spans 483 residues: Teichuronic acid biosynthesis protein TuaB (483 aa).

11 helical membrane-spanning segments follow: residues 15–34 (TSIS…ALLG), 41–63 (EFGL…DMGF), 83–105 (WLNI…VIAG), 112–134 (LVFL…QYQY), 154–176 (VLSF…YVIS), 294–316 (LALV…ITAV), 321–343 (WLAA…LMNP), 356–378 (LAFY…AVQT), 382–404 (LTVA…WLLA), 411–433 (LSAY…IIAF), and 448–470 (MRLA…KAYP).

This sequence belongs to the polysaccharide synthase family.

The protein localises to the cell membrane. It participates in cell wall biogenesis; teichuronic acid biosynthesis. In terms of biological role, might be involved in the translocation of teichuronic acid repeating units from the inner to the outer surface of the membrane. The polypeptide is Teichuronic acid biosynthesis protein TuaB (tuaB) (Bacillus subtilis (strain 168)).